The following is a 145-amino-acid chain: Putative pre-16S rRNA nuclease (145 aa).

It belongs to the YqgF nuclease family.

Its subcellular location is the cytoplasm. Functionally, could be a nuclease involved in processing of the 5'-end of pre-16S rRNA. This Pseudomonas fluorescens (strain ATCC BAA-477 / NRRL B-23932 / Pf-5) protein is Putative pre-16S rRNA nuclease.